The following is a 358-amino-acid chain: Aromatic amino acid aminotransferase (358 aa).

Lys-222 bears the N6-(pyridoxal phosphate)lysine mark.

This sequence belongs to the class-II pyridoxal-phosphate-dependent aminotransferase family. In terms of assembly, homodimer. Pyridoxal 5'-phosphate serves as cofactor.

The enzyme catalyses an aromatic L-alpha-amino acid + 2-oxoglutarate = an aromatic oxo-acid + L-glutamate. Its function is as follows. Aminotransferase that catalyzes the conversion of aromatic amino acids and 2-oxoglutarate into corresponding aromatic oxo acids and L-glutamate. This Mycobacterium sp. (strain JLS) protein is Aromatic amino acid aminotransferase.